The following is a 342-amino-acid chain: Foldase protein PrsA (342 aa).

A signal peptide spans 1 to 22 (MVSVKKIVASALVGVLMFSAVG). C23 is lipidated: N-palmitoyl cysteine. C23 carries S-diacylglycerol cysteine lipidation. A PpiC domain is found at 189–284 (DSGVLTKHLL…FGYHIIQAGA (96 aa)).

Belongs to the PrsA family.

The protein resides in the cell membrane. It catalyses the reaction [protein]-peptidylproline (omega=180) = [protein]-peptidylproline (omega=0). Its function is as follows. Plays a major role in protein secretion by helping the post-translocational extracellular folding of several secreted proteins. In Clostridium perfringens (strain ATCC 13124 / DSM 756 / JCM 1290 / NCIMB 6125 / NCTC 8237 / Type A), this protein is Foldase protein PrsA.